A 609-amino-acid chain; its full sequence is tRNA uridine 5-carboxymethylaminomethyl modification enzyme MnmG (609 aa).

FAD is bound by residues Gly11–Gly16, Val123, and Thr178. Gly270–Phe284 lines the NAD(+) pocket. Gln367 is an FAD binding site.

The protein belongs to the MnmG family. As to quaternary structure, homodimer. Heterotetramer of two MnmE and two MnmG subunits. FAD serves as cofactor.

It localises to the cytoplasm. Its function is as follows. NAD-binding protein involved in the addition of a carboxymethylaminomethyl (cmnm) group at the wobble position (U34) of certain tRNAs, forming tRNA-cmnm(5)s(2)U34. This chain is tRNA uridine 5-carboxymethylaminomethyl modification enzyme MnmG, found in Mycoplasmopsis synoviae (strain 53) (Mycoplasma synoviae).